The following is a 251-amino-acid chain: Pyrroloquinoline-quinone synthase (251 aa).

Belongs to the PqqC family.

The catalysed reaction is 6-(2-amino-2-carboxyethyl)-7,8-dioxo-1,2,3,4,7,8-hexahydroquinoline-2,4-dicarboxylate + 3 O2 = pyrroloquinoline quinone + 2 H2O2 + 2 H2O + H(+). It functions in the pathway cofactor biosynthesis; pyrroloquinoline quinone biosynthesis. In terms of biological role, ring cyclization and eight-electron oxidation of 3a-(2-amino-2-carboxyethyl)-4,5-dioxo-4,5,6,7,8,9-hexahydroquinoline-7,9-dicarboxylic-acid to PQQ. This chain is Pyrroloquinoline-quinone synthase, found in Pseudomonas putida (strain ATCC 700007 / DSM 6899 / JCM 31910 / BCRC 17059 / LMG 24140 / F1).